We begin with the raw amino-acid sequence, 85 residues long: Transcriptional repressor protein KorC (85 aa).

The segment at residues 28–47 is a DNA-binding region (H-T-H motif); sequence VLHLAGLTGGQAARILGLGA.

Its function is as follows. Acts with KorA as corepressor in the control of the kilC and kilE operons. This is Transcriptional repressor protein KorC (korC) from Escherichia coli.